The primary structure comprises 339 residues: Glycerol-3-phosphate dehydrogenase [NAD(P)+] (339 aa).

Serine 13, tryptophan 14, and lysine 108 together coordinate NADPH. Residues lysine 108, glycine 139, and serine 141 each coordinate sn-glycerol 3-phosphate. Alanine 143 is an NADPH binding site. Sn-glycerol 3-phosphate-binding residues include lysine 194, aspartate 247, serine 257, arginine 258, and asparagine 259. Catalysis depends on lysine 194, which acts as the Proton acceptor. Position 258 (arginine 258) interacts with NADPH. Residues valine 282 and glutamate 284 each coordinate NADPH.

It belongs to the NAD-dependent glycerol-3-phosphate dehydrogenase family.

It localises to the cytoplasm. The catalysed reaction is sn-glycerol 3-phosphate + NAD(+) = dihydroxyacetone phosphate + NADH + H(+). It catalyses the reaction sn-glycerol 3-phosphate + NADP(+) = dihydroxyacetone phosphate + NADPH + H(+). It participates in membrane lipid metabolism; glycerophospholipid metabolism. Functionally, catalyzes the reduction of the glycolytic intermediate dihydroxyacetone phosphate (DHAP) to sn-glycerol 3-phosphate (G3P), the key precursor for phospholipid synthesis. The polypeptide is Glycerol-3-phosphate dehydrogenase [NAD(P)+] (Streptococcus mutans serotype c (strain ATCC 700610 / UA159)).